The sequence spans 347 residues: Coproporphyrinogen-III oxidase, aerobic 2 (347 aa).

A disordered region spans residues 1 to 31; it reads MGRHSDNSLQESANHTVLLTSPTNTIPKDSR. The span at 7–31 shows a compositional bias: polar residues; that stretch reads NSLQESANHTVLLTSPTNTIPKDSR. The tract at residues 75–84 is important for dimerization; it reads VIREGRVFEQ. Serine 119 lines the substrate pocket. Histidine 133 serves as the catalytic Proton donor. Residues 135–137 and 305–310 each bind substrate; these read NYR and KGRTES. Residues 287 to 322 form an important for dimerization region; sequence YVEFNLVYDRGTVFGLQTKGRTESILMSLPPLARWE.

It belongs to the aerobic coproporphyrinogen-III oxidase family. As to quaternary structure, homodimer.

Its subcellular location is the cytoplasm. It carries out the reaction coproporphyrinogen III + O2 + 2 H(+) = protoporphyrinogen IX + 2 CO2 + 2 H2O. Its pathway is porphyrin-containing compound metabolism; protoporphyrin-IX biosynthesis; protoporphyrinogen-IX from coproporphyrinogen-III (O2 route): step 1/1. Its function is as follows. Key enzyme in heme biosynthesis. Catalyzes the oxidative decarboxylation of propionic acid side chains of rings A and B of coproporphyrinogen III. This chain is Coproporphyrinogen-III oxidase, aerobic 2, found in Nostoc sp. (strain PCC 7120 / SAG 25.82 / UTEX 2576).